A 194-amino-acid chain; its full sequence is Cysteine and glycine-rich protein 3 (194 aa).

The interval 1–5 is interaction with TCAP; it reads MPNWG. Residues 10–61 enclose the LIM zinc-binding 1 domain; it reads CGACDKTVYHAEEIQCNGRSFHKTCFHCMACRKALDSTTVAAHESEIYCKVC. The short motif at 64 to 69 is the Nuclear localization signal element; it reads RKYGPK. The segment at 94–105 is interaction with CLF2; that stretch reads QSPKPARAATTS. Residues Ser95, Ser111, and Ser153 each carry the phosphoserine modification. An LIM zinc-binding 2 domain is found at 120–171; it reads CPRCGKSVYAAEKVMGGGKPWHKTCFPCAICGKSLESTNVTDKDGELYCKVC.

In terms of assembly, self-associates. Oligomeric in the cytoplasm and monomeric in the nucleus. Homooligomers preferentially form along the actin cytoskeleton. Interacts with TCAP, ACTN2 and NRAP. Interacts with LDHD, SPTB, MYOD1, MYOG, MYF6. Interacts with GLRX3 (via C-terminus); GLRX3 and calcineurin compete for interaction with CSRP3. Interacts with CFL2; the stoichiometry influences F-actin depolymerization and possibly two molecules of CFL2 can interact with one molecule of CSRP3 resulting in the highest functional impact; the interaction is stronger with phosphorylated CFL2. In terms of processing, phosphorylated by PKC/PRKCA. As to expression, high in striated muscle and adult heart.

It localises to the nucleus. Its subcellular location is the cytoplasm. It is found in the cytoskeleton. The protein localises to the myofibril. The protein resides in the sarcomere. It localises to the z line. In terms of biological role, positive regulator of myogenesis. Acts as a cofactor for myogenic bHLH transcription factors such as MYOD1, and probably MYOG and MYF6. Enhances the DNA-binding activity of the MYOD1:TCF3 isoform E47 complex and may promote formation of a functional MYOD1:TCF3 isoform E47:MEF2A complex involved in myogenesis. Plays a crucial and specific role in the organization of cytosolic structures in cardiomyocytes. Could play a role in mechanical stretch sensing. May be a scaffold protein that promotes the assembly of interacting proteins at Z-line structures. It is essential for calcineurin anchorage to the Z line. Required for stress-induced calcineurin-NFAT activation. The role in regulation of cytoskeleton dynamics by association with CFL2 is reported conflictingly. Proposed to contribute to the maintenance of muscle cell integrity through an actin-based mechanism. Can directly bind to actin filaments, cross-link actin filaments into bundles without polarity selectivity and protect them from dilution- and cofilin-mediated depolymerization; the function seems to involve its self-association. In vitro can inhibit PKC/PRKCA activity. Proposed to be involved in cardiac stress signaling by down-regulating excessive PKC/PRKCA signaling. This Rattus norvegicus (Rat) protein is Cysteine and glycine-rich protein 3 (Csrp3).